The sequence spans 249 residues: Triosephosphate isomerase (249 aa).

Substrate-binding residues include N12 and K14. K14 carries the N6-acetyllysine modification. Position 68 is a 3'-nitrotyrosine (Y68). Phosphoserine is present on S80. H96 (electrophile) is an active-site residue. Position 106 is a phosphoserine (S106). K142 participates in a covalent cross-link: Glycyl lysine isopeptide (Lys-Gly) (interchain with G-Cter in SUMO1). Position 149 is an N6-succinyllysine (K149). At K156 the chain carries N6-acetyllysine; alternate. The residue at position 156 (K156) is an N6-succinyllysine; alternate. S159 is modified (phosphoserine). E166 serves as the catalytic Proton acceptor. T173 carries the post-translational modification Phosphothreonine. An N6-acetyllysine; alternate modification is found at K194. K194 bears the N6-succinyllysine; alternate mark. Position 194 is an N6-methyllysine; alternate (K194). Phosphoserine is present on S198. A 3'-nitrotyrosine modification is found at Y209. The residue at position 212 (S212) is a Phosphoserine. T214 carries the phosphothreonine modification. S223 carries the post-translational modification Phosphoserine. Residue K238 is modified to N6-acetyllysine.

Belongs to the triosephosphate isomerase family. Homodimer.

The protein localises to the cytoplasm. The enzyme catalyses dihydroxyacetone phosphate = methylglyoxal + phosphate. It carries out the reaction D-glyceraldehyde 3-phosphate = dihydroxyacetone phosphate. The protein operates within carbohydrate degradation; glycolysis; D-glyceraldehyde 3-phosphate from glycerone phosphate: step 1/1. Its pathway is carbohydrate biosynthesis; gluconeogenesis. Functionally, triosephosphate isomerase is an extremely efficient metabolic enzyme that catalyzes the interconversion between dihydroxyacetone phosphate (DHAP) and D-glyceraldehyde-3-phosphate (G3P) in glycolysis and gluconeogenesis. Its function is as follows. It is also responsible for the non-negligible production of methylglyoxal a reactive cytotoxic side-product that modifies and can alter proteins, DNA and lipids. This chain is Triosephosphate isomerase (TPI1), found in Pongo abelii (Sumatran orangutan).